The chain runs to 310 residues: Homeobox protein knotted-1-like 2 (310 aa).

Residues 178–208 are disordered; it reads SDDGAVSSDEELREDDDIAADDSQQRSNDRD. A compositionally biased stretch (acidic residues) spans 185–197; it reads SDEELREDDDIAA. One can recognise an ELK domain in the interval 208-228; that stretch reads DLKDQLLRKFGSHISSLKLEF. A DNA-binding region (homeobox; TALE-type) is located at residues 229–292; the sequence is SKKKKKGKLP…NQRKRHWKPS (64 aa).

It belongs to the TALE/KNOX homeobox family. In terms of assembly, may form heterodimeric complex with the TALE/BELL protein BEL1, BLH1 and BLH2. Interacts with OFP12 and OFP14. Interacts with BZIP30. In terms of tissue distribution, expressed predominantly in shoot apices of seedlings, in the receptacle and developing pistil of flowers and in axillary buds of inflorescence stems.

It is found in the nucleus. Functionally, may play a role in meristem function, and may be involved in maintaining cells in an undifferentiated, meristematic state. Probably binds to the DNA sequence 5'-TGAC-3'. The polypeptide is Homeobox protein knotted-1-like 2 (KNAT2) (Arabidopsis thaliana (Mouse-ear cress)).